A 137-amino-acid chain; its full sequence is MLFSLINQNQDLLENLFEDFKTNSLTNNNNIMKTDIQEQDNQYFITIELPGFKKEDVKVALEEGYLVVEAKNSKKNQIKEANFIRKERFQGFLRRSFYLGDDFLLEDIKGSLEQGLLKLSVPKKEVKPKEKHYIKLN.

The 113-residue stretch at 25–137 folds into the sHSP domain; the sequence is LTNNNNIMKT…PKEKHYIKLN (113 aa).

It belongs to the small heat shock protein (HSP20) family.

Functionally, probable chaperone. The chain is Probable Hsp20 family chaperone from Onion yellows phytoplasma (strain OY-M).